Here is a 441-residue protein sequence, read N- to C-terminus: Amino-acid acetyltransferase (441 aa).

The N-acetyltransferase domain maps to 295-434 (EQVRRATIND…QALYNYQRRS (140 aa)).

This sequence belongs to the acetyltransferase family. ArgA subfamily. As to quaternary structure, homohexamer.

It is found in the cytoplasm. The catalysed reaction is L-glutamate + acetyl-CoA = N-acetyl-L-glutamate + CoA + H(+). It functions in the pathway amino-acid biosynthesis; L-arginine biosynthesis; N(2)-acetyl-L-ornithine from L-glutamate: step 1/4. The sequence is that of Amino-acid acetyltransferase from Serratia proteamaculans (strain 568).